A 130-amino-acid chain; its full sequence is Holo-[acyl-carrier-protein] synthase (130 aa).

Positions 9 and 58 each coordinate Mg(2+).

It belongs to the P-Pant transferase superfamily. AcpS family. Requires Mg(2+) as cofactor.

It is found in the cytoplasm. The catalysed reaction is apo-[ACP] + CoA = holo-[ACP] + adenosine 3',5'-bisphosphate + H(+). In terms of biological role, transfers the 4'-phosphopantetheine moiety from coenzyme A to a Ser of acyl-carrier-protein. The chain is Holo-[acyl-carrier-protein] synthase from Mycobacterium tuberculosis (strain CDC 1551 / Oshkosh).